The chain runs to 171 residues: uncharacterized protein (171 aa).

Positions 139 to 171 are disordered; the sequence is ARKPTKSDDEEEEVGKMGGISSSINSWVQRQKL. A compositionally biased stretch (polar residues) spans 158-171; that stretch reads ISSSINSWVQRQKL.

This is an uncharacterized protein from Caenorhabditis elegans.